The chain runs to 580 residues: Proline--tRNA ligase (580 aa).

Belongs to the class-II aminoacyl-tRNA synthetase family. ProS type 1 subfamily. In terms of assembly, homodimer.

It is found in the cytoplasm. The enzyme catalyses tRNA(Pro) + L-proline + ATP = L-prolyl-tRNA(Pro) + AMP + diphosphate. In terms of biological role, catalyzes the attachment of proline to tRNA(Pro) in a two-step reaction: proline is first activated by ATP to form Pro-AMP and then transferred to the acceptor end of tRNA(Pro). As ProRS can inadvertently accommodate and process non-cognate amino acids such as alanine and cysteine, to avoid such errors it has two additional distinct editing activities against alanine. One activity is designated as 'pretransfer' editing and involves the tRNA(Pro)-independent hydrolysis of activated Ala-AMP. The other activity is designated 'posttransfer' editing and involves deacylation of mischarged Ala-tRNA(Pro). The misacylated Cys-tRNA(Pro) is not edited by ProRS. The polypeptide is Proline--tRNA ligase (Polynucleobacter necessarius subsp. necessarius (strain STIR1)).